Here is a 688-residue protein sequence, read N- to C-terminus: Elongation factor G (688 aa).

The tr-type G domain occupies 8–282 (DKFRNFGIMA…GVVDYLPSPL (275 aa)). GTP is bound by residues 17–24 (AHIDAGKT), 81–85 (DTPGH), and 135–138 (NKMD).

The protein belongs to the TRAFAC class translation factor GTPase superfamily. Classic translation factor GTPase family. EF-G/EF-2 subfamily.

Its subcellular location is the cytoplasm. Its function is as follows. Catalyzes the GTP-dependent ribosomal translocation step during translation elongation. During this step, the ribosome changes from the pre-translocational (PRE) to the post-translocational (POST) state as the newly formed A-site-bound peptidyl-tRNA and P-site-bound deacylated tRNA move to the P and E sites, respectively. Catalyzes the coordinated movement of the two tRNA molecules, the mRNA and conformational changes in the ribosome. This Clostridium botulinum (strain Eklund 17B / Type B) protein is Elongation factor G.